Consider the following 441-residue polypeptide: Thymidine phosphorylase (441 aa).

It belongs to the thymidine/pyrimidine-nucleoside phosphorylase family. In terms of assembly, homodimer.

The enzyme catalyses thymidine + phosphate = 2-deoxy-alpha-D-ribose 1-phosphate + thymine. It participates in pyrimidine metabolism; dTMP biosynthesis via salvage pathway; dTMP from thymine: step 1/2. The enzymes which catalyze the reversible phosphorolysis of pyrimidine nucleosides are involved in the degradation of these compounds and in their utilization as carbon and energy sources, or in the rescue of pyrimidine bases for nucleotide synthesis. The polypeptide is Thymidine phosphorylase (Chromobacterium violaceum (strain ATCC 12472 / DSM 30191 / JCM 1249 / CCUG 213 / NBRC 12614 / NCIMB 9131 / NCTC 9757 / MK)).